Consider the following 416-residue polypeptide: Glutamyl-tRNA reductase (416 aa).

Residues threonine 51–arginine 54, serine 110, glutamate 115–glutamine 117, and glutamine 121 contribute to the substrate site. Residue cysteine 52 is the Nucleophile of the active site. Glycine 190–glycine 195 contacts NADP(+).

This sequence belongs to the glutamyl-tRNA reductase family. As to quaternary structure, homodimer.

It catalyses the reaction (S)-4-amino-5-oxopentanoate + tRNA(Glu) + NADP(+) = L-glutamyl-tRNA(Glu) + NADPH + H(+). It participates in porphyrin-containing compound metabolism; protoporphyrin-IX biosynthesis; 5-aminolevulinate from L-glutamyl-tRNA(Glu): step 1/2. In terms of biological role, catalyzes the NADPH-dependent reduction of glutamyl-tRNA(Glu) to glutamate 1-semialdehyde (GSA). In Francisella tularensis subsp. holarctica (strain OSU18), this protein is Glutamyl-tRNA reductase.